A 101-amino-acid polypeptide reads, in one-letter code: uncharacterized protein (101 aa).

The protein resides in the plastid. It localises to the chloroplast. This is an uncharacterized protein from Chlamydomonas reinhardtii (Chlamydomonas smithii).